The sequence spans 277 residues: Formamidopyrimidine-DNA glycosylase (277 aa).

The active-site Schiff-base intermediate with DNA is Pro-2. Catalysis depends on Glu-3, which acts as the Proton donor. Lys-58 functions as the Proton donor; for beta-elimination activity in the catalytic mechanism. DNA-binding residues include His-95, Arg-113, and Arg-158. The segment at 243–277 adopts an FPG-type zinc-finger fold; it reads GVYDRANQPCLRCGGVVRQIRQAGRSTYYCTGCQH. Arg-267 functions as the Proton donor; for delta-elimination activity in the catalytic mechanism.

Belongs to the FPG family. Monomer. It depends on Zn(2+) as a cofactor.

It catalyses the reaction Hydrolysis of DNA containing ring-opened 7-methylguanine residues, releasing 2,6-diamino-4-hydroxy-5-(N-methyl)formamidopyrimidine.. The enzyme catalyses 2'-deoxyribonucleotide-(2'-deoxyribose 5'-phosphate)-2'-deoxyribonucleotide-DNA = a 3'-end 2'-deoxyribonucleotide-(2,3-dehydro-2,3-deoxyribose 5'-phosphate)-DNA + a 5'-end 5'-phospho-2'-deoxyribonucleoside-DNA + H(+). In terms of biological role, involved in base excision repair of DNA damaged by oxidation or by mutagenic agents. Acts as a DNA glycosylase that recognizes and removes damaged bases. Has a preference for oxidized purines, such as 7,8-dihydro-8-oxoguanine (8-oxoG). Has AP (apurinic/apyrimidinic) lyase activity and introduces nicks in the DNA strand. Cleaves the DNA backbone by beta-delta elimination to generate a single-strand break at the site of the removed base with both 3'- and 5'-phosphates. The sequence is that of Formamidopyrimidine-DNA glycosylase from Dechloromonas aromatica (strain RCB).